The following is a 91-amino-acid chain: Small ribosomal subunit protein bS16 (91 aa).

It belongs to the bacterial ribosomal protein bS16 family.

This chain is Small ribosomal subunit protein bS16, found in Latilactobacillus sakei subsp. sakei (strain 23K) (Lactobacillus sakei subsp. sakei).